The primary structure comprises 314 residues: Pyridoxal 5'-phosphate synthase-like subunit PDX1.2 (314 aa).

A2 bears the N-acetylalanine mark.

The protein belongs to the PdxS/SNZ family. In terms of assembly, homodimer or heterodimer with PDX1.1 or PDX1.3. No interaction with PDX2. Expressed in callus tissues, flowers and roots. Weakly expressed in leaves and stems.

Its subcellular location is the cytoplasm. Functionally, the protein has no function in the formation of pyridoxal 5'-phosphate. In Arabidopsis thaliana (Mouse-ear cress), this protein is Pyridoxal 5'-phosphate synthase-like subunit PDX1.2 (PDX12).